A 62-amino-acid chain; its full sequence is Large ribosomal subunit protein eL24 (62 aa).

C6, C9, C32, and C36 together coordinate Zn(2+). A C4-type zinc finger spans residues 6–36; it reads CYFCGQMLEPGTGKLYIKKDGSTYFMCSSKC.

This sequence belongs to the eukaryotic ribosomal protein eL24 family. Part of the 50S ribosomal subunit. Forms a cluster with proteins L3 and L14. Requires Zn(2+) as cofactor.

Functionally, binds to the 23S rRNA. In Methanosarcina mazei (strain ATCC BAA-159 / DSM 3647 / Goe1 / Go1 / JCM 11833 / OCM 88) (Methanosarcina frisia), this protein is Large ribosomal subunit protein eL24.